The following is a 396-amino-acid chain: NADH-quinone oxidoreductase subunit D (396 aa).

This sequence belongs to the complex I 49 kDa subunit family. NDH-1 is composed of 14 different subunits. Subunits NuoB, C, D, E, F, and G constitute the peripheral sector of the complex.

Its subcellular location is the cell inner membrane. It catalyses the reaction a quinone + NADH + 5 H(+)(in) = a quinol + NAD(+) + 4 H(+)(out). NDH-1 shuttles electrons from NADH, via FMN and iron-sulfur (Fe-S) centers, to quinones in the respiratory chain. The immediate electron acceptor for the enzyme in this species is believed to be ubiquinone. Couples the redox reaction to proton translocation (for every two electrons transferred, four hydrogen ions are translocated across the cytoplasmic membrane), and thus conserves the redox energy in a proton gradient. In Rhodopseudomonas palustris (strain BisA53), this protein is NADH-quinone oxidoreductase subunit D.